The sequence spans 1203 residues: Exonuclease/helicase subunit RexA (1203 aa).

Residues 4–472 form the UvrD-like helicase ATP-binding domain; it reads VKLTPEQNEA…IRLKENFRSR (469 aa). 25 to 32 provides a ligand contact to ATP; it reads ASAGSGKT. Positions 503–785 constitute a UvrD-like helicase C-terminal domain; that stretch reads VQGNISDYPV…RVMTFHKSKG (283 aa).

Belongs to the helicase family. AddA subfamily. In terms of assembly, heterodimer of RexA (AddA) and RexB. Mg(2+) is required as a cofactor.

It catalyses the reaction Couples ATP hydrolysis with the unwinding of duplex DNA by translocating in the 3'-5' direction.. The enzyme catalyses ATP + H2O = ADP + phosphate + H(+). Functionally, the heterodimer acts both as an ATP-dependent DNA helicase and an ATP-dependent, dual-direction single-stranded exonuclease. Recognizes the L.lactis chi site (5'-GCGCGTG-3'), which stimulates homologous recombination. The RexA (AddA) nuclease domain is required for chi fragment generation; this subunit has 3'-&gt;5' exonuclease activity and probably also performs the helicase function. The polypeptide is Exonuclease/helicase subunit RexA (Lactococcus lactis subsp. cremoris (strain MG1363)).